The sequence spans 183 residues: MSQKPAKEGPRLSKNQKYSEHFSIHCCPPFTFLNSKKEIVDRKYSICKSGCFYQKKEEDWICCACQKTRTSRRAKSPQRPKQQPAAPPAVVRAPAKPRSPPRSERQPRSPPRSERQPRSPPRSERQPRSPPRSERQPRPRPEVRPPPAKQRPPQKSKQQPRSSPLRGPGASRGGSPVKASRFW.

The interval 68 to 183 (TRTSRRAKSP…GSPVKASRFW (116 aa)) is disordered. Basic residues predominate over residues 69 to 78 (RTSRRAKSPQ). Residues 79-96 (RPKQQPAAPPAVVRAPAK) are compositionally biased toward low complexity. A run of 4 repeats spans residues 97 to 106 (PRSPPRSERQ), 107 to 116 (PRSPPRSERQ), 117 to 126 (PRSPPRSERQ), and 127 to 136 (PRSPPRSERQ). The segment at 97 to 136 (PRSPPRSERQPRSPPRSERQPRSPPRSERQPRSPPRSERQ) is 4 X 10 AA tandem repeats of P-R-S-P-P-R-S-E-R-Q. Phosphoserine is present on residues Ser-99 and Ser-109. The segment covering 101–143 (PRSERQPRSPPRSERQPRSPPRSERQPRSPPRSERQPRPRPEV) has biased composition (basic and acidic residues). A compositionally biased stretch (low complexity) spans 151 to 164 (RPPQKSKQQPRSSP).

Its subcellular location is the cytoplasm. The protein localises to the perinuclear region. Its function is as follows. May play a role in compacting or stabilizing the myelin sheath, possibly by binding the negatively charged acidic phospholipids of the cytoplasmic membrane. In Homo sapiens (Human), this protein is Myelin-associated oligodendrocyte basic protein (MOBP).